Reading from the N-terminus, the 132-residue chain is Small ribosomal subunit protein eS12 (132 aa).

Belongs to the eukaryotic ribosomal protein eS12 family.

The protein localises to the cytoplasm. This is Small ribosomal subunit protein eS12 (rps12) from Xenopus laevis (African clawed frog).